Consider the following 526-residue polypeptide: Probable feruloyl esterase B-2 (526 aa).

The N-terminal stretch at 1–18 (MTKLSLLPLLTLASAVLA) is a signal peptide. 2 disulfide bridges follow: Cys27/Cys74 and Cys62/Cys113. Residue Asn52 is glycosylated (N-linked (GlcNAc...) asparagine). The N-linked (GlcNAc...) asparagine glycan is linked to Asn137. Cystine bridges form between Cys186–Cys441, Cys255–Cys272, Cys281–Cys291, and Cys503–Cys525. Ser187 functions as the Acyl-ester intermediate in the catalytic mechanism. The N-linked (GlcNAc...) asparagine glycan is linked to Asn233. Ca(2+)-binding residues include Asp256, Asp259, Ala261, Asp263, and Ile265. Asn311 carries an N-linked (GlcNAc...) asparagine glycan. Active-site charge relay system residues include Asp400 and His440. Residue Asn516 is glycosylated (N-linked (GlcNAc...) asparagine).

It belongs to the tannase family.

The protein resides in the secreted. It carries out the reaction feruloyl-polysaccharide + H2O = ferulate + polysaccharide.. Functionally, involved in degradation of plant cell walls. Hydrolyzes the feruloyl-arabinose ester bond in arabinoxylans as well as the feruloyl-galactose and feruloyl-arabinose ester bonds in pectin. This is Probable feruloyl esterase B-2 (faeB-2) from Aspergillus fumigatus (strain CBS 144.89 / FGSC A1163 / CEA10) (Neosartorya fumigata).